Consider the following 218-residue polypeptide: MANLTTLAVSTRAKAGKGAARATRREGLVPAVIYGGKQEPSIIALDPRVIMKELHRGGWSSRVYNLAAEGAEPVAALIRDVQLHPVTDAPIHVDFQRVAAGTKVHVEVSIAFVGEEKSPGIKRGGVLNVVRHYVDVQADPANIPEHFTAELSGLDIHDNVRWTDLKGTEGVVLGSGQAADMVIASIAAPTIDAEMEAEAAAKAAAEAEAAAKPGAKKK.

Belongs to the bacterial ribosomal protein bL25 family. CTC subfamily. As to quaternary structure, part of the 50S ribosomal subunit; part of the 5S rRNA/L5/L18/L25 subcomplex. Contacts the 5S rRNA. Binds to the 5S rRNA independently of L5 and L18.

In terms of biological role, this is one of the proteins that binds to the 5S RNA in the ribosome where it forms part of the central protuberance. This chain is Large ribosomal subunit protein bL25, found in Gluconobacter oxydans (strain 621H) (Gluconobacter suboxydans).